Here is a 293-residue protein sequence, read N- to C-terminus: AKT-interacting protein homolog A (293 aa).

Residues 1–11 (MNPFWNMSSAS) show a composition bias toward polar residues. A disordered region spans residues 1 to 45 (MNPFWNMSSASVRKRSENDEKISTGDQKISPPRSSSAKKQLPPIP). The span at 14-23 (KRSENDEKIS) shows a compositional bias: basic and acidic residues. The span at 24-38 (TGDQKISPPRSSSAK) shows a compositional bias: polar residues. The UBC core domain maps to 75–223 (YLEYSLLAEF…VVDSVKLCNS (149 aa)). Residues 256 to 266 (AQKKKSEEQSK) show a composition bias toward basic and acidic residues. Residues 256 to 293 (AQKKKSEEQSKGLHVSGLSWVKPGSVLPFSKEENSLQT) are disordered.

This sequence belongs to the ubiquitin-conjugating enzyme family. FTS subfamily.

It is found in the cytoplasm. It localises to the cell membrane. Its function is as follows. May function to promote vesicle trafficking and/or fusion. May also regulate apoptosis. This is AKT-interacting protein homolog A (aktip-a) from Xenopus laevis (African clawed frog).